The following is a 621-amino-acid chain: DNA mismatch repair protein MutL (621 aa).

It belongs to the DNA mismatch repair MutL/HexB family.

In terms of biological role, this protein is involved in the repair of mismatches in DNA. It is required for dam-dependent methyl-directed DNA mismatch repair. May act as a 'molecular matchmaker', a protein that promotes the formation of a stable complex between two or more DNA-binding proteins in an ATP-dependent manner without itself being part of a final effector complex. The chain is DNA mismatch repair protein MutL from Xylella fastidiosa (strain M12).